The chain runs to 112 residues: MSAAIQFTRGIDEPVVPDVRLTRSRDGQNGTATFYFDEPQALVGEVRQDITGMYLLDDEGELATREVKAKFINGQPAGLEAVYLMRSPEEWDRFMRFMQRYAEANGLGFTEA.

Belongs to the Psb28 family. As to quaternary structure, part of the photosystem II complex.

It is found in the cellular thylakoid membrane. The sequence is that of Photosystem II reaction center Psb28 protein from Synechococcus elongatus (strain ATCC 33912 / PCC 7942 / FACHB-805) (Anacystis nidulans R2).